Consider the following 156-residue polypeptide: Peptidyl-prolyl cis-trans isomerase cypE (156 aa).

Positions 2-155 (TEQTVTLQTT…DEIRIIKATA (154 aa)) constitute a PPIase cyclophilin-type domain.

The protein belongs to the cyclophilin-type PPIase family. As to quaternary structure, interacts with snwA.

It is found in the cytoplasm. The protein resides in the nucleus. The catalysed reaction is [protein]-peptidylproline (omega=180) = [protein]-peptidylproline (omega=0). Its function is as follows. Catalyzes the cis-trans isomerization of proline imidic peptide bonds in oligopeptides. Plays a role in protein folding, transport and assembly. This chain is Peptidyl-prolyl cis-trans isomerase cypE (cypE), found in Dictyostelium discoideum (Social amoeba).